Consider the following 155-residue polypeptide: Endoribonuclease YbeY (155 aa).

Zn(2+)-binding residues include histidine 117, histidine 121, and histidine 127.

Belongs to the endoribonuclease YbeY family. Requires Zn(2+) as cofactor.

The protein resides in the cytoplasm. Functionally, single strand-specific metallo-endoribonuclease involved in late-stage 70S ribosome quality control and in maturation of the 3' terminus of the 16S rRNA. This Psychrobacter cryohalolentis (strain ATCC BAA-1226 / DSM 17306 / VKM B-2378 / K5) protein is Endoribonuclease YbeY.